A 367-amino-acid polypeptide reads, in one-letter code: tRNA-specific 2-thiouridylase MnmA 2 (367 aa).

Residues 10–17 (GMSGGVDS) and Met-36 each bind ATP. The interaction with target base in tRNA stretch occupies residues 96-98 (NPD). The active-site Nucleophile is Cys-101. Cys-101 and Cys-197 are joined by a disulfide. Gly-125 provides a ligand contact to ATP. The segment at 147–149 (KDQ) is interaction with tRNA. The active-site Cysteine persulfide intermediate is the Cys-197. The interval 314–315 (RY) is interaction with tRNA.

Belongs to the MnmA/TRMU family.

It is found in the cytoplasm. It carries out the reaction S-sulfanyl-L-cysteinyl-[protein] + uridine(34) in tRNA + AH2 + ATP = 2-thiouridine(34) in tRNA + L-cysteinyl-[protein] + A + AMP + diphosphate + H(+). Catalyzes the 2-thiolation of uridine at the wobble position (U34) of tRNA, leading to the formation of s(2)U34. The polypeptide is tRNA-specific 2-thiouridylase MnmA 2 (Aliarcobacter butzleri (strain RM4018) (Arcobacter butzleri)).